A 141-amino-acid polypeptide reads, in one-letter code: Nucleoside diphosphate kinase (141 aa).

Residues Lys11, Phe59, Arg87, Thr93, Arg104, and Asn114 each coordinate ATP. His117 serves as the catalytic Pros-phosphohistidine intermediate.

The protein belongs to the NDK family. As to quaternary structure, homotetramer. It depends on Mg(2+) as a cofactor.

It localises to the cytoplasm. The catalysed reaction is a 2'-deoxyribonucleoside 5'-diphosphate + ATP = a 2'-deoxyribonucleoside 5'-triphosphate + ADP. The enzyme catalyses a ribonucleoside 5'-diphosphate + ATP = a ribonucleoside 5'-triphosphate + ADP. Its function is as follows. Major role in the synthesis of nucleoside triphosphates other than ATP. The ATP gamma phosphate is transferred to the NDP beta phosphate via a ping-pong mechanism, using a phosphorylated active-site intermediate. The sequence is that of Nucleoside diphosphate kinase from Cupriavidus metallidurans (strain ATCC 43123 / DSM 2839 / NBRC 102507 / CH34) (Ralstonia metallidurans).